The chain runs to 456 residues: Bifunctional protein GlmU (456 aa).

A pyrophosphorylase region spans residues 1-229; the sequence is MSNSAMSVVI…LSEVEGVNNR (229 aa). UDP-N-acetyl-alpha-D-glucosamine is bound by residues 11–14, K25, Q76, 81–82, 103–105, G140, E154, N169, and N227; these read LAAG, GT, and YGD. Residue D105 coordinates Mg(2+). Residue N227 coordinates Mg(2+). Residues 230-250 are linker; the sequence is LQLARLERVYQAEQAEKLLLA. Residues 251–456 form an N-acetyltransferase region; sequence GVMLRDPARF…QGWQRPVKKK (206 aa). UDP-N-acetyl-alpha-D-glucosamine-binding residues include R333 and K351. H363 serves as the catalytic Proton acceptor. UDP-N-acetyl-alpha-D-glucosamine is bound by residues Y366 and N377. Acetyl-CoA contacts are provided by residues A380, 386–387, S405, A423, and R440; that span reads NY.

This sequence in the N-terminal section; belongs to the N-acetylglucosamine-1-phosphate uridyltransferase family. In the C-terminal section; belongs to the transferase hexapeptide repeat family. In terms of assembly, homotrimer. Requires Mg(2+) as cofactor.

The protein resides in the cytoplasm. The enzyme catalyses alpha-D-glucosamine 1-phosphate + acetyl-CoA = N-acetyl-alpha-D-glucosamine 1-phosphate + CoA + H(+). The catalysed reaction is N-acetyl-alpha-D-glucosamine 1-phosphate + UTP + H(+) = UDP-N-acetyl-alpha-D-glucosamine + diphosphate. The protein operates within nucleotide-sugar biosynthesis; UDP-N-acetyl-alpha-D-glucosamine biosynthesis; N-acetyl-alpha-D-glucosamine 1-phosphate from alpha-D-glucosamine 6-phosphate (route II): step 2/2. Its pathway is nucleotide-sugar biosynthesis; UDP-N-acetyl-alpha-D-glucosamine biosynthesis; UDP-N-acetyl-alpha-D-glucosamine from N-acetyl-alpha-D-glucosamine 1-phosphate: step 1/1. It functions in the pathway bacterial outer membrane biogenesis; LPS lipid A biosynthesis. In terms of biological role, catalyzes the last two sequential reactions in the de novo biosynthetic pathway for UDP-N-acetylglucosamine (UDP-GlcNAc). The C-terminal domain catalyzes the transfer of acetyl group from acetyl coenzyme A to glucosamine-1-phosphate (GlcN-1-P) to produce N-acetylglucosamine-1-phosphate (GlcNAc-1-P), which is converted into UDP-GlcNAc by the transfer of uridine 5-monophosphate (from uridine 5-triphosphate), a reaction catalyzed by the N-terminal domain. This is Bifunctional protein GlmU from Klebsiella pneumoniae subsp. pneumoniae (strain ATCC 700721 / MGH 78578).